Here is a 419-residue protein sequence, read N- to C-terminus: Adenylosuccinate synthetase (419 aa).

GTP-binding positions include 11–17 (GDEGKGK) and 39–41 (GHT). Catalysis depends on Asp12, which acts as the Proton acceptor. The Mg(2+) site is built by Asp12 and Gly39. Residues 12-15 (DEGK), 37-40 (NAGH), Thr129, Arg143, Asn218, Thr233, and Arg297 each bind IMP. His40 acts as the Proton donor in catalysis. Residue 293–299 (VTTGRKR) coordinates substrate. Residues Arg299, 325-327 (KLD), and 407-409 (GTG) contribute to the GTP site.

This sequence belongs to the adenylosuccinate synthetase family. In terms of assembly, homodimer. The cofactor is Mg(2+).

Its subcellular location is the cytoplasm. It catalyses the reaction IMP + L-aspartate + GTP = N(6)-(1,2-dicarboxyethyl)-AMP + GDP + phosphate + 2 H(+). It participates in purine metabolism; AMP biosynthesis via de novo pathway; AMP from IMP: step 1/2. In terms of biological role, plays an important role in the de novo pathway and in the salvage pathway of purine nucleotide biosynthesis. Catalyzes the first committed step in the biosynthesis of AMP from IMP. This is Adenylosuccinate synthetase from Coccidioides posadasii (strain C735) (Valley fever fungus).